Consider the following 341-residue polypeptide: Ketol-acid reductoisomerase (NADP(+)) (341 aa).

A KARI N-terminal Rossmann domain is found at 2 to 182 (AKIYYNDDAD…GGTRAGVIET (181 aa)). NADP(+) is bound by residues 25–28 (YGSQ), serine 51, serine 53, and 83–86 (DQVQ). Histidine 108 is an active-site residue. NADP(+) is bound at residue glycine 134. Positions 183–328 (TFTEETESDL…RKLRSLFAWE (146 aa)) constitute a KARI C-terminal knotted domain. 4 residues coordinate Mg(2+): aspartate 191, glutamate 195, glutamate 227, and glutamate 231. Serine 252 is a substrate binding site.

This sequence belongs to the ketol-acid reductoisomerase family. It depends on Mg(2+) as a cofactor.

The catalysed reaction is (2R)-2,3-dihydroxy-3-methylbutanoate + NADP(+) = (2S)-2-acetolactate + NADPH + H(+). It catalyses the reaction (2R,3R)-2,3-dihydroxy-3-methylpentanoate + NADP(+) = (S)-2-ethyl-2-hydroxy-3-oxobutanoate + NADPH + H(+). Its pathway is amino-acid biosynthesis; L-isoleucine biosynthesis; L-isoleucine from 2-oxobutanoate: step 2/4. The protein operates within amino-acid biosynthesis; L-valine biosynthesis; L-valine from pyruvate: step 2/4. In terms of biological role, involved in the biosynthesis of branched-chain amino acids (BCAA). Catalyzes an alkyl-migration followed by a ketol-acid reduction of (S)-2-acetolactate (S2AL) to yield (R)-2,3-dihydroxy-isovalerate. In the isomerase reaction, S2AL is rearranged via a Mg-dependent methyl migration to produce 3-hydroxy-3-methyl-2-ketobutyrate (HMKB). In the reductase reaction, this 2-ketoacid undergoes a metal-dependent reduction by NADPH to yield (R)-2,3-dihydroxy-isovalerate. The chain is Ketol-acid reductoisomerase (NADP(+)) from Kocuria rhizophila (strain ATCC 9341 / DSM 348 / NBRC 103217 / DC2201).